Here is a 537-residue protein sequence, read N- to C-terminus: Cytoplasmic dynein 2 intermediate chain 2 (537 aa).

Serine 15 bears the Phosphoserine mark. Residues 80 to 93 (RTHADAQVQTEAPE) form a DYNLL2 binding region. The segment at 107–132 (LRLEAFLRRVEAMVIRELNNNWQSHA) is DYNLRB1 binding. WD repeat units follow at residues 216–256 (EVPS…DPLL), 265–309 (THTD…QLRL), 391–431 (PHGG…PLTS), 434–474 (LSHK…QKPT), and 481–521 (QDGS…TEQG).

This sequence belongs to the dynein light intermediate chain family. As to quaternary structure, the cytoplasmic dynein 2 complex consists of two catalytic heavy chains (HCs) and a number of non-catalytic subunits presented by intermediate chains (ICs), light intermediate chains (LICs) and light chains (LCs). Among them, a heavy chain (DYNC2H1), two intermediate chains (DYNC2I2 and DYNC2I1), a light intermediate chain (DYNC2LI1), and a light chain (DYNLT2B) are unique to the cytoplasmic dynein complex 2, but a subset of the light chains are also shared by dynein-1 and dynein-2 complexes. Interacts with DYNC2I1; their C-terminal domains each bind a copy of the heavy chain, and their extended N-terminal regions are held together by an array of light chain dimers. Interacts with DYNLL2; this interaction is essential for dynein-2-mediated retrograde trafficking of ciliary proteins. Interacts with DYNLRB1; this interaction is essential for dynein-2-mediated retrograde trafficking of ciliary proteins. Interacts (via the WD domains) with MAP3K7 and TAB3. Interacts (via WD domains) with TAB2 (via C-terminus). Interacts (via WD domains) with TRAF6 (via TRAF-type domains). Expressed in brain, thymus, heart, lung, liver, spleen, kidney, testis and intestine.

The protein localises to the cytoplasm. Its subcellular location is the cytoskeleton. It localises to the cilium basal body. It is found in the cilium axoneme. The protein resides in the cell projection. The protein localises to the cilium. Its subcellular location is the microtubule organizing center. It localises to the centrosome. It is found in the filopodium. Its function is as follows. Acts as one of several non-catalytic accessory components of the cytoplasmic dynein 2 complex (dynein-2 complex), a motor protein complex that drives the movement of cargos along microtubules within cilia and flagella in concert with the intraflagellar transport (IFT) system. DYNC2I2 plays a major role in retrograde ciliary protein trafficking and in ciliogenesis. Required also to maintain a functional transition zone. Acts as a negative regulator of the Toll-like and IL-1R receptor signaling pathways. Inhibits the MAP3K7-induced NF-kappa-B activation pathway. Inhibits MAP3K7 phosphorylation at 'Thr-184' and 'Thr-187' upon Il-1 beta stimulation. The sequence is that of Cytoplasmic dynein 2 intermediate chain 2 (Dync2i2) from Mus musculus (Mouse).